The sequence spans 463 residues: L-seryl-tRNA(Sec) selenium transferase (463 aa).

Lysine 295 bears the N6-(pyridoxal phosphate)lysine mark.

Belongs to the SelA family. In terms of assembly, homodecamer; pentamer of dimers. Binds only one seryl-tRNA(Sec) per dimer. The cofactor is pyridoxal 5'-phosphate.

The protein localises to the cytoplasm. The enzyme catalyses L-seryl-tRNA(Sec) + selenophosphate + H(+) = L-selenocysteinyl-tRNA(Sec) + phosphate. The protein operates within aminoacyl-tRNA biosynthesis; selenocysteinyl-tRNA(Sec) biosynthesis; selenocysteinyl-tRNA(Sec) from L-seryl-tRNA(Sec) (bacterial route): step 1/1. Functionally, converts seryl-tRNA(Sec) to selenocysteinyl-tRNA(Sec) required for selenoprotein biosynthesis. The chain is L-seryl-tRNA(Sec) selenium transferase from Salmonella typhimurium (strain LT2 / SGSC1412 / ATCC 700720).